The primary structure comprises 380 residues: Gibberellin 20 oxidase 3 (380 aa).

In terms of domain architecture, Fe2OG dioxygenase spans 221-321 (DSDSIFRLNY…RKTFAFFLCP (101 aa)). 3 residues coordinate Fe cation: His-246, Asp-248, and His-302. Arg-312 is a catalytic residue.

The protein belongs to the iron/ascorbate-dependent oxidoreductase family. GA20OX subfamily. The cofactor is Fe(2+). L-ascorbate is required as a cofactor. In terms of tissue distribution, expressed at high level in developing siliques. Detected in seeds, roots, leaves and inflorescences. In seeds, specifically detected at the outer layer of the outer integument.

It catalyses the reaction gibberellin A12 + 2 2-oxoglutarate + 3 O2 + H(+) = gibberellin A9 + 2 succinate + 3 CO2 + 2 H2O. It carries out the reaction gibberellin A12 + 3 2-oxoglutarate + 3 O2 = gibberellin A25 + 3 succinate + 3 CO2 + H2O + H(+). The catalysed reaction is gibberellin A53 + 2 2-oxoglutarate + 3 O2 + H(+) = gibberellin A20 + 2 succinate + 3 CO2 + 2 H2O. It participates in plant hormone biosynthesis; gibberellin biosynthesis. Its function is as follows. Key oxidase enzyme in the biosynthesis of gibberellin that catalyzes the conversion of GA12 and GA53 to GA9 and GA20 respectively, via a three-step oxidation at C-20 of the GA skeleton, and GA25 is also formed as a minor product. GA53 is less effectively oxidized than GA12. The protein is Gibberellin 20 oxidase 3 (GA20OX3) of Arabidopsis thaliana (Mouse-ear cress).